The sequence spans 532 residues: Glucose-6-phosphate isomerase (532 aa).

The active-site Proton donor is Glu322. Active-site residues include His351 and Lys457.

This sequence belongs to the GPI family.

The protein resides in the cytoplasm. It catalyses the reaction alpha-D-glucose 6-phosphate = beta-D-fructose 6-phosphate. It participates in carbohydrate biosynthesis; gluconeogenesis. The protein operates within carbohydrate degradation; glycolysis; D-glyceraldehyde 3-phosphate and glycerone phosphate from D-glucose: step 2/4. In terms of biological role, catalyzes the reversible isomerization of glucose-6-phosphate to fructose-6-phosphate. The protein is Glucose-6-phosphate isomerase of Synechococcus sp. (strain JA-2-3B'a(2-13)) (Cyanobacteria bacterium Yellowstone B-Prime).